The primary structure comprises 365 residues: Putative 2-dehydropantoate 2-reductase (365 aa).

This sequence belongs to the ketopantoate reductase family.

It carries out the reaction (R)-pantoate + NADP(+) = 2-dehydropantoate + NADPH + H(+). It participates in cofactor biosynthesis; (R)-pantothenate biosynthesis; (R)-pantoate from 3-methyl-2-oxobutanoate: step 2/2. Catalyzes the NADPH-dependent reduction of ketopantoate into pantoic acid. The chain is Putative 2-dehydropantoate 2-reductase (KPR) from Arabidopsis thaliana (Mouse-ear cress).